The chain runs to 20 residues: Large ribosomal subunit protein uL5 (20 aa).

This sequence belongs to the universal ribosomal protein uL5 family. In terms of assembly, part of the 50S ribosomal subunit; part of the 5S rRNA/L5/L18/L25 subcomplex. Contacts the 5S rRNA and the P site tRNA. Forms a bridge to the 30S subunit in the 70S ribosome.

Functionally, this is one of the proteins that bind and probably mediate the attachment of the 5S RNA into the large ribosomal subunit, where it forms part of the central protuberance. In the 70S ribosome it contacts protein S13 of the 30S subunit (bridge B1b), connecting the two subunits; this bridge is implicated in subunit movement. Contacts the P site tRNA; the 5S rRNA and some of its associated proteins might help stabilize positioning of ribosome-bound tRNAs. The protein is Large ribosomal subunit protein uL5 (rplE) of Bacillus cereus.